The following is a 414-amino-acid chain: Bystin (414 aa).

Residues 1 to 11 show a composition bias toward basic residues; that stretch reads MSAKRNTKLRH. Residues 1–91 form a disordered region; sequence MSAKRNTKLR…PSDDEGQADD (91 aa). Basic and acidic residues predominate over residues 12–24; sequence APLEHAYVDDKSV. Basic residues predominate over residues 25-34; it reads RRNKRSKQRG.

It belongs to the bystin family.

The protein localises to the nucleus. It localises to the nucleolus. Its function is as follows. Required for processing of 20S pre-rRNA precursor and biogenesis of 40S ribosomal subunits. The protein is Bystin (bysl) of Monosiga brevicollis (Choanoflagellate).